A 1070-amino-acid polypeptide reads, in one-letter code: Alpha-glucosidase (1070 aa).

The signal sequence occupies residues 1 to 35 (MRSIKAASLTPLLAALFTTLSSTLALPSSVWEHQL). N48, N99, N144, N161, N208, N384, N458, N480, and N513 each carry an N-linked (GlcNAc...) asparagine glycan. The Nucleophile role is filled by D526. E529 is a catalytic residue. Residues N544, N566, N574, N578, and N635 are each glycosylated (N-linked (GlcNAc...) asparagine). The active-site Proton donor is D730. 10 N-linked (GlcNAc...) asparagine glycosylation sites follow: N818, N885, N916, N983, N992, N996, N1008, N1029, N1043, and N1052.

Belongs to the glycosyl hydrolase 31 family.

It catalyses the reaction Hydrolysis of terminal, non-reducing (1-&gt;4)-linked alpha-D-glucose residues with release of alpha-D-glucose.. Hydrolyzes a broad range of alpha-D-linked glucopyranosides, including maltose (alpha-1,4), sucrose (alpha-1,2), isomaltose (alpha-1,6) and turanose (alpha-1,3). The protein is Alpha-glucosidase of Candida tsukubaensis (Yeast).